The sequence spans 327 residues: GMP reductase (327 aa).

Catalysis depends on cysteine 176, which acts as the Thioimidate intermediate. 205 to 228 (IIADGGIRTHGDIVKSIRFGATMV) is a binding site for NADP(+).

Belongs to the IMPDH/GMPR family. GuaC type 2 subfamily.

It carries out the reaction IMP + NH4(+) + NADP(+) = GMP + NADPH + 2 H(+). Catalyzes the irreversible NADPH-dependent deamination of GMP to IMP. It functions in the conversion of nucleobase, nucleoside and nucleotide derivatives of G to A nucleotides, and in maintaining the intracellular balance of A and G nucleotides. The protein is GMP reductase of Helicobacter pylori (strain ATCC 700392 / 26695) (Campylobacter pylori).